The chain runs to 180 residues: D-glycero-beta-D-manno-heptose-1,7-bisphosphate 7-phosphatase (180 aa).

Catalysis depends on aspartate 14, which acts as the Nucleophile. Mg(2+) is bound by residues aspartate 14 and aspartate 16. Residues 14-16 (DRD), 22-25 (NDHY), and 56-59 (TNQS) contribute to the substrate site. The Proton donor role is filled by aspartate 16. The Zn(2+) site is built by cysteine 95, histidine 97, cysteine 110, and histidine 112. 113 to 114 (RK) serves as a coordination point for substrate. Aspartate 139 serves as a coordination point for Mg(2+).

This sequence belongs to the gmhB family. In terms of assembly, monomer. Mg(2+) serves as cofactor.

The protein resides in the cytoplasm. The catalysed reaction is D-glycero-beta-D-manno-heptose 1,7-bisphosphate + H2O = D-glycero-beta-D-manno-heptose 1-phosphate + phosphate. It participates in nucleotide-sugar biosynthesis; ADP-L-glycero-beta-D-manno-heptose biosynthesis; ADP-L-glycero-beta-D-manno-heptose from D-glycero-beta-D-manno-heptose 7-phosphate: step 2/4. It functions in the pathway bacterial outer membrane biogenesis; LPS core biosynthesis. Converts the D-glycero-beta-D-manno-heptose 1,7-bisphosphate (beta-HBP) intermediate into D-glycero-beta-D-manno-heptose 1-phosphate by removing the phosphate group at the C-7 position. Also catalyzes the dephosphorylation of D-glycero-alpha-D-manno-heptose 1,7-bisphosphate in vitro. The sequence is that of D-glycero-beta-D-manno-heptose-1,7-bisphosphate 7-phosphatase from Rhodopseudomonas palustris (strain ATCC BAA-98 / CGA009).